Here is a 276-residue protein sequence, read N- to C-terminus: Large ribosomal subunit protein uL2 (276 aa).

Residues Thr-219–Gly-276 form a disordered region. The span at Lys-252 to Gly-276 shows a compositional bias: basic residues.

Belongs to the universal ribosomal protein uL2 family. As to quaternary structure, part of the 50S ribosomal subunit. Forms a bridge to the 30S subunit in the 70S ribosome.

Functionally, one of the primary rRNA binding proteins. Required for association of the 30S and 50S subunits to form the 70S ribosome, for tRNA binding and peptide bond formation. It has been suggested to have peptidyltransferase activity; this is somewhat controversial. Makes several contacts with the 16S rRNA in the 70S ribosome. The chain is Large ribosomal subunit protein uL2 from Acholeplasma laidlawii (strain PG-8A).